The sequence spans 310 residues: tRNA dimethylallyltransferase (310 aa).

Position 24 to 31 (24 to 31) interacts with ATP; sequence GPTASGKT. Residue 26 to 31 coordinates substrate; it reads TASGKT. The tract at residues 49–52 is interaction with substrate tRNA; the sequence is DSRQ.

The protein belongs to the IPP transferase family. As to quaternary structure, monomer. It depends on Mg(2+) as a cofactor.

The enzyme catalyses adenosine(37) in tRNA + dimethylallyl diphosphate = N(6)-dimethylallyladenosine(37) in tRNA + diphosphate. Its function is as follows. Catalyzes the transfer of a dimethylallyl group onto the adenine at position 37 in tRNAs that read codons beginning with uridine, leading to the formation of N6-(dimethylallyl)adenosine (i(6)A). This chain is tRNA dimethylallyltransferase, found in Synechococcus sp. (strain WH7803).